Reading from the N-terminus, the 253-residue chain is Solute carrier family 66 member 2 (253 aa).

The next 6 helical transmembrane spans lie at 7–27 (GWLL…AMVF), 49–69 (FSTY…LFWF), 72–92 (HFES…LLML), 125–145 (FADY…ITYL), 150–170 (ALFV…LGVP), and 214–234 (VCGL…YVFT). Residues 14–80 (HQLVSWGAAG…RHFESPLLWQ (67 aa)) form the PQ-loop 1 domain. The PQ-loop 2 domain maps to 160–215 (AVLTEAMLGVPQLYRNHRHQSTEGMSIKMVLMWTSGDTFKTAYFLLNGAPLQFSVC).

It localises to the membrane. This Bos taurus (Bovine) protein is Solute carrier family 66 member 2 (SLC66A2).